A 539-amino-acid chain; its full sequence is Glucose-6-phosphate isomerase (539 aa).

Catalysis depends on Glu-349, which acts as the Proton donor. Active-site residues include His-380 and Lys-508. A disordered region spans residues 519 to 539 (ESGASGQHDPSTAGLIQRLKR).

It belongs to the GPI family.

It localises to the cytoplasm. The catalysed reaction is alpha-D-glucose 6-phosphate = beta-D-fructose 6-phosphate. The protein operates within carbohydrate biosynthesis; gluconeogenesis. It functions in the pathway carbohydrate degradation; glycolysis; D-glyceraldehyde 3-phosphate and glycerone phosphate from D-glucose: step 2/4. Catalyzes the reversible isomerization of glucose-6-phosphate to fructose-6-phosphate. The polypeptide is Glucose-6-phosphate isomerase (Caulobacter vibrioides (strain ATCC 19089 / CIP 103742 / CB 15) (Caulobacter crescentus)).